The primary structure comprises 189 residues: Chitin synthase 2 (189 aa).

Belongs to the chitin synthase family. Class II subfamily.

The protein localises to the cell membrane. The enzyme catalyses [(1-&gt;4)-N-acetyl-beta-D-glucosaminyl](n) + UDP-N-acetyl-alpha-D-glucosamine = [(1-&gt;4)-N-acetyl-beta-D-glucosaminyl](n+1) + UDP + H(+). Its function is as follows. Polymerizes chitin, a structural polymer of the cell wall and septum, by transferring the sugar moiety of UDP-GlcNAc to the non-reducing end of the growing chitin polymer. This Xylohypha bantiana protein is Chitin synthase 2 (CHS2).